Consider the following 415-residue polypeptide: MPESTPSLPDWLSRGMADLFPAGDPTDADQALAARLAQAEKEGRPLRVKLGIDPTGSNIHLGHSILFRKLRAFQDAGHTAVLIIGDFTARIGDPTGKCATRVQLSKEDVAANASTYLRQLGQDQPKETALLDFETPGRLEVRYNSEWLEGMDLPAVIGLLGTGTVGQMLAKDDFSKRYGSGTPIALHEFLYPLLQGYDSVAVNADVELGGTDQKFNVAMGRDLQRHFNKGTQFGLLLPILVGLDGVQKMSKSLGNVVGLEEDPLSMYSKLEKVGDGAINDYVTLLTDLDLATLPENPREKQKAMALAVTASRHGMEAAQKAQLDAASLVGGAGDAATEVPGASLAEVNFPAKAFYLLSAVGICASSSEARRQIKGGAVRLEGEKIGDPNQEFASAAELEGKVLQLGKKTFRRLTA.

A 'HIGH' region motif is present at residues 54–63; sequence PTGSNIHLGH. The 'KMSKS' region motif lies at 248–252; sequence KMSKS. Lys251 is an ATP binding site. The 65-residue stretch at 351–415 folds into the S4 RNA-binding domain; the sequence is AKAFYLLSAV…GKKTFRRLTA (65 aa).

Belongs to the class-I aminoacyl-tRNA synthetase family. TyrS type 2 subfamily. In terms of assembly, homodimer.

It is found in the cytoplasm. The catalysed reaction is tRNA(Tyr) + L-tyrosine + ATP = L-tyrosyl-tRNA(Tyr) + AMP + diphosphate + H(+). Catalyzes the attachment of tyrosine to tRNA(Tyr) in a two-step reaction: tyrosine is first activated by ATP to form Tyr-AMP and then transferred to the acceptor end of tRNA(Tyr). This Parasynechococcus marenigrum (strain WH8102) protein is Tyrosine--tRNA ligase.